The primary structure comprises 81 residues: Photosystem I iron-sulfur center (81 aa).

4Fe-4S ferredoxin-type domains are found at residues 2-31 (SHTV…MIPW) and 39-68 (IASS…VRVY). [4Fe-4S] cluster contacts are provided by C11, C14, C17, C21, C48, C51, C54, and C58.

The eukaryotic PSI reaction center is composed of at least 11 subunits. [4Fe-4S] cluster is required as a cofactor.

It is found in the plastid. The protein localises to the chloroplast thylakoid membrane. The enzyme catalyses reduced [plastocyanin] + hnu + oxidized [2Fe-2S]-[ferredoxin] = oxidized [plastocyanin] + reduced [2Fe-2S]-[ferredoxin]. Apoprotein for the two 4Fe-4S centers FA and FB of photosystem I (PSI); essential for photochemical activity. FB is the terminal electron acceptor of PSI, donating electrons to ferredoxin. The C-terminus interacts with PsaA/B/D and helps assemble the protein into the PSI complex. Required for binding of PsaD and PsaE to PSI. PSI is a plastocyanin-ferredoxin oxidoreductase, converting photonic excitation into a charge separation, which transfers an electron from the donor P700 chlorophyll pair to the spectroscopically characterized acceptors A0, A1, FX, FA and FB in turn. This is Photosystem I iron-sulfur center from Chaetosphaeridium globosum (Charophycean green alga).